The following is a 292-amino-acid chain: Poly-beta-1,6-N-acetyl-D-glucosamine N-deacetylase (292 aa).

Positions 1–28 are cleaved as a signal peptide; it reads MKYRKFIILVLSILIILPVSTLDGHHIA. The 179-residue stretch at 114–292 folds into the NodB homology domain; sequence RSVWINFDDM…WDGFHEKDET (179 aa).

Belongs to the polysaccharide deacetylase family.

Its subcellular location is the secreted. It localises to the cell wall. Catalyzes the N-deacetylation of poly-beta-1,6-N-acetyl-D-glucosamine (PNAG, also referred to as PIA), a biofilm adhesin polysaccharide. N-deacetylation is crucial for attachment of the polysaccharide to the bacterial cell surface; it leads to the introduction of positive charges in the otherwise neutral PIA polymer, allowing electrostatic interactions. The sequence is that of Poly-beta-1,6-N-acetyl-D-glucosamine N-deacetylase (icaB) from Staphylococcus aureus (strain COL).